Consider the following 221-residue polypeptide: Probable septum site-determining protein MinC (221 aa).

Belongs to the MinC family. In terms of assembly, interacts with MinD and FtsZ.

In terms of biological role, cell division inhibitor that blocks the formation of polar Z ring septums. Rapidly oscillates between the poles of the cell to destabilize FtsZ filaments that have formed before they mature into polar Z rings. Prevents FtsZ polymerization. The protein is Probable septum site-determining protein MinC of Aliivibrio fischeri (strain MJ11) (Vibrio fischeri).